The following is a 359-amino-acid chain: Probable dual-specificity RNA methyltransferase RlmN (359 aa).

The active-site Proton acceptor is Glu-91. Residues 97-329 (QHYGHSVCVT…KKNGVNCVVR (233 aa)) enclose the Radical SAM core domain. A disulfide bond links Cys-104 and Cys-340. Residues Cys-111, Cys-115, and Cys-118 each coordinate [4Fe-4S] cluster. Residues 163–164 (GE), Ser-195, 218–220 (SLH), and Asn-296 contribute to the S-adenosyl-L-methionine site. Cys-340 serves as the catalytic S-methylcysteine intermediate.

Belongs to the radical SAM superfamily. RlmN family. It depends on [4Fe-4S] cluster as a cofactor.

It localises to the cytoplasm. The catalysed reaction is adenosine(2503) in 23S rRNA + 2 reduced [2Fe-2S]-[ferredoxin] + 2 S-adenosyl-L-methionine = 2-methyladenosine(2503) in 23S rRNA + 5'-deoxyadenosine + L-methionine + 2 oxidized [2Fe-2S]-[ferredoxin] + S-adenosyl-L-homocysteine. The enzyme catalyses adenosine(37) in tRNA + 2 reduced [2Fe-2S]-[ferredoxin] + 2 S-adenosyl-L-methionine = 2-methyladenosine(37) in tRNA + 5'-deoxyadenosine + L-methionine + 2 oxidized [2Fe-2S]-[ferredoxin] + S-adenosyl-L-homocysteine. In terms of biological role, specifically methylates position 2 of adenine 2503 in 23S rRNA and position 2 of adenine 37 in tRNAs. In Streptococcus pyogenes serotype M5 (strain Manfredo), this protein is Probable dual-specificity RNA methyltransferase RlmN.